The following is a 187-amino-acid chain: Threonylcarbamoyl-AMP synthase (187 aa).

Residues 4–187 (NHTDDPFLLD…GHSGQTIRDN (184 aa)) enclose the YrdC-like domain. The tract at residues 168 to 187 (GSRSPSKIRHGHSGQTIRDN) is disordered.

This sequence belongs to the SUA5 family. TsaC subfamily.

The protein resides in the cytoplasm. The catalysed reaction is L-threonine + hydrogencarbonate + ATP = L-threonylcarbamoyladenylate + diphosphate + H2O. Functionally, required for the formation of a threonylcarbamoyl group on adenosine at position 37 (t(6)A37) in tRNAs that read codons beginning with adenine. Catalyzes the conversion of L-threonine, HCO(3)(-)/CO(2) and ATP to give threonylcarbamoyl-AMP (TC-AMP) as the acyladenylate intermediate, with the release of diphosphate. This is Threonylcarbamoyl-AMP synthase from Pseudoalteromonas atlantica (strain T6c / ATCC BAA-1087).